The primary structure comprises 64 residues: Large ribosomal subunit protein bL33 (64 aa).

The protein belongs to the bacterial ribosomal protein bL33 family.

The sequence is that of Large ribosomal subunit protein bL33 from Nostoc punctiforme (strain ATCC 29133 / PCC 73102).